Here is a 139-residue protein sequence, read N- to C-terminus: Transcription initiation factor IIA small chain homolog (139 aa).

The interval 113–139 (LSAQGPSKRVNRAHAAAAGDDEDDDSD) is disordered.

This sequence belongs to the TFIIA subunit 2 family.

Its subcellular location is the nucleus. The sequence is that of Transcription initiation factor IIA small chain homolog from Caenorhabditis elegans.